Consider the following 753-residue polypeptide: Subtilisin-like protease SBT3.17 (753 aa).

A signal peptide spans 1–29 (MGNSFLIADTSSLVIGLLLILNGVFISAA). Residues 30–116 (KHYGLNKIHI…VVPSRVMRLK (87 aa)) constitute a propeptide, activation peptide. Positions 38–115 (HIVHLGAKQH…RVVPSRVMRL (78 aa)) constitute an Inhibitor I9 domain. N-linked (GlcNAc...) asparagine glycosylation is present at Asn97. Positions 120-603 (TFDYLGLLPT…GGLINPEKVT (484 aa)) constitute a Peptidase S8 domain. The active-site Charge relay system is Asp150. N-linked (GlcNAc...) asparagine glycosylation is present at Asn161. His227 serves as the catalytic Charge relay system. Asn369 carries an N-linked (GlcNAc...) asparagine glycan. Ser534 acts as the Charge relay system in catalysis. N-linked (GlcNAc...) asparagine glycans are attached at residues Asn639, Asn704, and Asn737.

The protein belongs to the peptidase S8 family.

Its subcellular location is the secreted. This chain is Subtilisin-like protease SBT3.17, found in Arabidopsis thaliana (Mouse-ear cress).